The sequence spans 315 residues: Homoserine kinase (315 aa).

An ATP-binding site is contributed by 96 to 106 (PHSRGLGSSAA).

The protein belongs to the GHMP kinase family. Homoserine kinase subfamily.

It localises to the cytoplasm. It catalyses the reaction L-homoserine + ATP = O-phospho-L-homoserine + ADP + H(+). It functions in the pathway amino-acid biosynthesis; L-threonine biosynthesis; L-threonine from L-aspartate: step 4/5. Its function is as follows. Catalyzes the ATP-dependent phosphorylation of L-homoserine to L-homoserine phosphate. In Mycolicibacterium paratuberculosis (strain ATCC BAA-968 / K-10) (Mycobacterium paratuberculosis), this protein is Homoserine kinase.